The chain runs to 338 residues: Malate dehydrogenase, mitochondrial (338 aa).

Residues 1-24 (MLSALARPAGAALRRSFSTSAQNN) constitute a mitochondrion transit peptide. NAD(+)-binding positions include 31–37 (GASGGIG) and Asp57. O-linked (GlcNAc) serine glycosylation is present at Ser33. N6-acetyllysine; alternate is present on residues Lys78 and Lys91. 2 positions are modified to N6-succinyllysine; alternate: Lys78 and Lys91. Substrate contacts are provided by Arg104 and Arg110. NAD(+) is bound by residues Asn117 and 140–142 (IAN). Asn142 provides a ligand contact to substrate. Lys165 is subject to N6-acetyllysine. Arg176 is a binding site for substrate. Lys185 is subject to N6-acetyllysine; alternate. Position 185 is an N6-succinyllysine; alternate (Lys185). The active-site Proton acceptor is His200. Lys203 is modified (N6-succinyllysine). Residues Lys215 and Lys239 each carry the N6-acetyllysine; alternate modification. Lys215 and Lys239 each carry N6-succinyllysine; alternate. Residue Lys239 is modified to N6-malonyllysine; alternate. A Phosphoserine modification is found at Ser246. Met251 contributes to the NAD(+) binding site. Lys269 is modified (N6-succinyllysine). N6-acetyllysine; alternate is present on residues Lys296, Lys301, and Lys307. N6-succinyllysine; alternate is present on residues Lys296, Lys301, and Lys307. Position 307 is an N6-malonyllysine; alternate (Lys307). Phosphothreonine is present on Thr309. An N6-acetyllysine; alternate mark is found at Lys314 and Lys324. An N6-succinyllysine; alternate mark is found at Lys314 and Lys324. Ser326 is subject to Phosphoserine. N6-acetyllysine; alternate occurs at positions 328, 329, and 335. Residue Lys328 is modified to N6-succinyllysine; alternate. N6-malonyllysine; alternate is present on Lys329. Lys335 carries the post-translational modification N6-succinyllysine; alternate.

This sequence belongs to the LDH/MDH superfamily. MDH type 1 family. As to quaternary structure, homodimer. Post-translationally, acetylation is enhanced after treatment either with trichostin A (TCA) or with nicotinamide (NAM) with the appearance of tri- and tetraacetylations. Glucose also increases acetylation. Acetylation of Lys-239 and Lys-314 is observed in liver mitochondria from fasted mice but not from fed mice.

The protein localises to the mitochondrion matrix. The catalysed reaction is (S)-malate + NAD(+) = oxaloacetate + NADH + H(+). With respect to regulation, enzyme activity is enhanced by acetylation. The protein is Malate dehydrogenase, mitochondrial (Mdh2) of Mus musculus (Mouse).